A 207-amino-acid chain; its full sequence is ATP-dependent Clp protease proteolytic subunit (207 aa).

The Nucleophile role is filled by serine 111. Residue histidine 136 is part of the active site.

This sequence belongs to the peptidase S14 family. In terms of assembly, fourteen ClpP subunits assemble into 2 heptameric rings which stack back to back to give a disk-like structure with a central cavity, resembling the structure of eukaryotic proteasomes.

It localises to the cytoplasm. The catalysed reaction is Hydrolysis of proteins to small peptides in the presence of ATP and magnesium. alpha-casein is the usual test substrate. In the absence of ATP, only oligopeptides shorter than five residues are hydrolyzed (such as succinyl-Leu-Tyr-|-NHMec, and Leu-Tyr-Leu-|-Tyr-Trp, in which cleavage of the -Tyr-|-Leu- and -Tyr-|-Trp bonds also occurs).. Cleaves peptides in various proteins in a process that requires ATP hydrolysis. Has a chymotrypsin-like activity. Plays a major role in the degradation of misfolded proteins. This chain is ATP-dependent Clp protease proteolytic subunit, found in Aliivibrio salmonicida (strain LFI1238) (Vibrio salmonicida (strain LFI1238)).